Consider the following 340-residue polypeptide: Nitrilase (340 aa).

One can recognise a CN hydrolase domain in the interval 7 to 273 (IRAAAVQIAP…EGMVVADLDM (267 aa)). The active-site Proton acceptor is glutamate 47. Residue lysine 129 is part of the active site. The Nucleophile role is filled by cysteine 163.

This sequence belongs to the carbon-nitrogen hydrolase superfamily. Nitrilase family. Forms oligomers.

It catalyses the reaction a nitrile + 2 H2O = a carboxylate + NH4(+). The catalysed reaction is phenylpropanonitrile + 2 H2O = 3-phenylpropanoate + NH4(+). It carries out the reaction an aliphatic nitrile + 2 H2O = a carboxylate + NH4(+). With respect to regulation, highly resistant to various miscible cosolvents and tolerates high substrate concentrations. In terms of biological role, catalyzes the hydrolysis of a broad range of nitriles to yield their corresponding carboxylic acid and ammonia. In vitro, shows high activity toward benzylic/unsaturated nitriles. The preferred substrate is trans-cinnamonitrile, followed by mono/di-cyanopyridines and aromatic substituted nitriles, with a moderate activity toward 3-phenylpropionitrile. Shows weaker activity toward the common dinitrile fumaronitrile. Also shows weak activity toward some aliphatic nitriles, including adiponitrile and glutaronitrile, and the arylacetonitrile 2-thiopheneacetonitrile. This is Nitrilase from Paraburkholderia phymatum (strain DSM 17167 / CIP 108236 / LMG 21445 / STM815) (Burkholderia phymatum).